We begin with the raw amino-acid sequence, 78 residues long: Large ribosomal subunit protein bL28 (78 aa).

Belongs to the bacterial ribosomal protein bL28 family.

The sequence is that of Large ribosomal subunit protein bL28 from Prochlorococcus marinus (strain MIT 9312).